We begin with the raw amino-acid sequence, 207 residues long: Glycerol-3-phosphate acyltransferase 1 (207 aa).

A run of 5 helical transmembrane segments spans residues 3-23, 53-73, 85-105, 127-147, and 154-174; these read YVIA…QIVG, IVVA…LLIL, HIYI…PITM, IALI…YLAV, and ISFL…IVVG.

It belongs to the PlsY family. In terms of assembly, probably interacts with PlsX.

It localises to the cell membrane. The catalysed reaction is an acyl phosphate + sn-glycerol 3-phosphate = a 1-acyl-sn-glycero-3-phosphate + phosphate. It functions in the pathway lipid metabolism; phospholipid metabolism. Functionally, catalyzes the transfer of an acyl group from acyl-phosphate (acyl-PO(4)) to glycerol-3-phosphate (G3P) to form lysophosphatidic acid (LPA). This enzyme utilizes acyl-phosphate as fatty acyl donor, but not acyl-CoA or acyl-ACP. This Oceanobacillus iheyensis (strain DSM 14371 / CIP 107618 / JCM 11309 / KCTC 3954 / HTE831) protein is Glycerol-3-phosphate acyltransferase 1.